Consider the following 664-residue polypeptide: Prelamin-A/C (664 aa).

N-acetylmethionine is present on Met-1. The interval 1–24 is disordered; the sequence is METPSQRRATRSGAQASSTPLSPT. Residues 1-33 form a head region; the sequence is METPSQRRATRSGAQASSTPLSPTRITRLQEKE. An interaction with MLIP region spans residues 1–130; it reads METPSQRRAT…TKKEGDLMAA (130 aa). Thr-3 carries the post-translational modification Phosphothreonine. Position 5 is a phosphoserine (Ser-5). The residue at position 10 (Thr-10) is a Phosphothreonine. Ser-12 and Ser-18 each carry phosphoserine. Thr-19 is modified (phosphothreonine). A Phosphoserine modification is found at Ser-22. The region spanning 31 to 387 is the IF rod domain; sequence EKEDLQELND…KLLEGEEERL (357 aa). Residue Lys-32 is modified to N6-acetyllysine; alternate. An N6-succinyllysine; alternate modification is found at Lys-32. Lys-32 participates in a covalent cross-link: Glycyl lysine isopeptide (Lys-Gly) (interchain with G-Cter in SUMO2); alternate. Residues 34-70 are coil 1A; that stretch reads DLQELNDRLAVYIDRVRSLETENAGLRLRITESEEVV. Phosphoserine is present on residues Ser-51, Ser-66, and Ser-71. The segment at 71–80 is linker 1; the sequence is SREVSGIKSA. N6-acetyllysine occurs at positions 78 and 97. The segment at 81 to 218 is coil 1B; that stretch reads YEAELGDARK…NIYSEELRET (138 aa). A Glycyl lysine isopeptide (Lys-Gly) (interchain with G-Cter in SUMO2) cross-link involves residue Lys-97. Phosphoserine is present on Ser-107. Residues Lys-108, Lys-114, Lys-123, Lys-135, Lys-144, and Lys-155 each carry the N6-acetyllysine modification. Lys-171 carries the post-translational modification N6-acetyllysine; alternate. Lys-171 bears the N6-succinyllysine; alternate mark. A Glycyl lysine isopeptide (Lys-Gly) (interchain with G-Cter in SUMO2); alternate cross-link involves residue Lys-171. An N6-acetyllysine mark is found at Lys-180, Lys-201, and Lys-208. Residue Lys-201 forms a Glycyl lysine isopeptide (Lys-Gly) (interchain with G-Cter in SUMO2); alternate linkage. Residue Lys-201 forms a Glycyl lysine isopeptide (Lys-Gly) (interchain with G-Cter in SUMO); alternate linkage. Residue Lys-208 forms a Glycyl lysine isopeptide (Lys-Gly) (interchain with G-Cter in SUMO2) linkage. Ser-212 is modified (phosphoserine). Residues Lys-219 and Lys-233 each participate in a glycyl lysine isopeptide (Lys-Gly) (interchain with G-Cter in SUMO2) cross-link. The segment at 219 to 242 is linker 2; the sequence is KRRHETRLVEIDNGKQREFESRLA. N6-acetyllysine occurs at positions 233, 260, 265, and 270. The coil 2 stretch occupies residues 243 to 383; that stretch reads DALQDLRAQH…HAYRKLLEGE (141 aa). Residue Lys-260 forms a Glycyl lysine isopeptide (Lys-Gly) (interchain with G-Cter in SUMO2); alternate linkage. Lys-270 is covalently cross-linked (Glycyl lysine isopeptide (Lys-Gly) (interchain with G-Cter in SUMO2); alternate). Phosphoserine occurs at positions 277, 282, 301, and 307. Lys-311 participates in a covalent cross-link: Glycyl lysine isopeptide (Lys-Gly) (interchain with G-Cter in SUMO2); alternate. 3 positions are modified to N6-acetyllysine: Lys-311, Lys-316, and Lys-341. Glycyl lysine isopeptide (Lys-Gly) (interchain with G-Cter in SUMO2) cross-links involve residues Lys-366 and Lys-378. Residues 384–442 are disordered; that stretch reads EERLRLSPSPTSQRSRGRASSHSSQTQSGGSVTKKRKLESSESRSSFSQHARTSGRVAV. Residues 384–664 are tail; sequence EERLRLSPSP…TQSPQNCSIM (281 aa). Phosphoserine occurs at positions 390, 392, 395, 398, 403, 404, 406, 407, and 414. Over residues 403–414 the composition is skewed to low complexity; sequence SSHSSQTQSGGS. Residue Thr-416 is modified to Phosphothreonine. An N6-acetyllysine modification is found at Lys-417. Residues Lys-417 and Lys-420 each participate in a glycyl lysine isopeptide (Lys-Gly) (interchain with G-Cter in SUMO2) cross-link. A Nuclear localization signal motif is present at residues 417–422; the sequence is KKRKLE. Phosphoserine is present on residues Ser-423, Ser-426, Ser-429, and Ser-431. Positions 428 to 545 constitute an LTD domain; sequence SSFSQHARTS…EEVAMRKLVR (118 aa). Residue Lys-450 forms a Glycyl lysine isopeptide (Lys-Gly) (interchain with G-Cter in SUMO2); alternate linkage. Residues Lys-450 and Lys-457 each carry the N6-acetyllysine modification. 2 positions are modified to phosphoserine: Ser-458 and Ser-463. Glycyl lysine isopeptide (Lys-Gly) (interchain with G-Cter in SUMO2) cross-links involve residues Lys-470 and Lys-486. Lys-486 is subject to N6-acetyllysine. A phosphothreonine mark is found at Thr-496 and Thr-505. A phosphoserine mark is found at Ser-533 and Ser-546. At Thr-548 the chain carries Phosphothreonine. The tract at residues 555–577 is disordered; sequence DEDGDDLLHHHHGSHGSSSGDPA. Phosphoserine occurs at positions 568 and 571. A Glycyl lysine isopeptide (Lys-Gly) (interchain with G-Cter in SUMO2); alternate cross-link involves residue Lys-597. Lys-597 participates in a covalent cross-link: Glycyl lysine isopeptide (Lys-Gly) (interchain with G-Cter in SUMO1); alternate. The segment at 598 to 620 is disordered; sequence ASASSSGAQVGGSISSGSSASSV. Phosphoserine is present on residues Ser-612, Ser-613, Ser-616, and Ser-619. O-linked (GlcNAc) serine glycosylation is found at Ser-625 and Ser-628. 3 positions are modified to phosphoserine: Ser-628, Ser-632, and Ser-636. Residues 647–661 constitute a propeptide, removed in Lamin-A/C form; that stretch reads LLGNSRPRTQSPQNC. Cys-661 bears the Cysteine methyl ester mark. Cys-661 carries S-farnesyl cysteine lipidation. A propeptide spans 662–664 (removed in Prelamin-A/C form and in Lamin-A/C form); that stretch reads SIM.

The protein belongs to the intermediate filament family. In terms of assembly, homodimer of lamin A and lamin C. Lamin dimers then assemble into dimeric head-to-tail polymers. Ultimately, two head-to-tail polymers assemble laterally into a protofilament with a uniformly shaped rod of 3.5 nm in diameter. Interacts with lamin-associated polypeptides IA, IB and TMPO-alpha, RB1 and with emerin. Interacts with SREBF1, SREBF2, SUN2 and TMEM43. Interacts with TMEM201. Proteolytically processed isoform A interacts with NARF. Interacts with SUN1. Interacts with MLIP. Interacts with DMPK; may regulate nuclear envelope stability. Interacts with SUV39H1; the interaction increases stability of SUV39H1. Interacts with SYNE2. Interacts with ITSN1 isoform 2. Interacts with IFFO1; enables the formation of an interior nucleoskeleton that is recruited to DNA double-strand breaks. Interacts with EMD. As to quaternary structure, interacts (via C-terminus) with LEMD2 (via N-terminus) (in vitro). In terms of processing, proteolytic cleavage of the C-terminal of 18 residues of prelamin-A/C results in the production of lamin-A/C. The prelamin-A/C maturation pathway includes farnesylation of CAAX motif by protein farnesyltransferase (FNTA and FNTB), removal of the last three amino acids (-AAX) by RCE1/FACE2 and/or ZMPSTE24, methylation of the C-terminal cysteine by ICMT and endoproteolytic removal of the last 15 C-terminal amino acids by ZMPSTE24. Proteolytic cleavage requires prior farnesylation and methylation, and absence of these blocks cleavage. Farnesylation of prelamin-A/C facilitates nuclear envelope targeting. Post-translationally, phosphorylation plays a key role in lamin organization, subcellular localization and nuclear envelope disintegration. Phosphorylation by CDK1 at Ser-22 and Ser-392 at the onset of mitosis drives lamin disassembly and nuclear envelope breakdown. Phosphorylation at Ser-22 and Ser-392 during interphase promotes localization to the nucleoplasm and regulates lamina assembly. Phosphorylation at Ser-22, Ser-392 and Ser-628 during interphase causes redistribution between the nucleus and the cytoplasm. Phosphorylation at Ser-22 by CDK1 regulates matrix stiffness. Phosphorylation status of Ser-22 determines its localization between double-strand break (DSB) sites and the nuclear matrix. Phosphorylated by ATR at Ser-282 in response to DNA damage, leading to lamin disassembly and nuclear envelope rupture. Phosphorylation also regulates stability in micronuclei arising from genome instability: phosphorylation at Ser-395 by ATR in response to genome instability and double-stranded DNA breaks primes LMNA for subsequent phosphorylation at Ser-392 by CDK1 and micronuclei envelope rupture. The rupture of micronuclear envelope triggers the cGAS-STING pathway thereby activating the type I interferon response and innate immunity. In terms of processing, acetylation by KAT8 is required for nuclear architecture. Sumoylation is necessary for the localization to the nuclear envelope.

The protein localises to the nucleus lamina. It localises to the nucleus envelope. It is found in the nucleus. Its subcellular location is the nucleoplasm. The protein resides in the nucleus matrix. In terms of biological role, lamins are intermediate filament proteins that assemble into a filamentous meshwork, and which constitute the major components of the nuclear lamina, a fibrous layer on the nucleoplasmic side of the inner nuclear membrane. Lamins provide a framework for the nuclear envelope, bridging the nuclear envelope and chromatin, thereby playing an important role in nuclear assembly, chromatin organization, nuclear membrane and telomere dynamics. Lamin A and C also regulate matrix stiffness by conferring nuclear mechanical properties. The structural integrity of the lamina is strictly controlled by the cell cycle, as seen by the disintegration and formation of the nuclear envelope in prophase and telophase, respectively. Lamin A and C are present in equal amounts in the lamina of mammals. Also invoved in DNA repair: recruited by DNA repair proteins XRCC4 and IFFO1 to the DNA double-strand breaks (DSBs) to prevent chromosome translocation by immobilizing broken DNA ends. Required for normal development of peripheral nervous system and skeletal muscle and for muscle satellite cell proliferation. Required for osteoblastogenesis and bone formation. Also prevents fat infiltration of muscle and bone marrow, helping to maintain the volume and strength of skeletal muscle and bone. Required for cardiac homeostasis. Prelamin-A/C can accelerate smooth muscle cell senescence. It acts to disrupt mitosis and induce DNA damage in vascular smooth muscle cells (VSMCs), leading to mitotic failure, genomic instability, and premature senescence. This chain is Prelamin-A/C (LMNA), found in Sus scrofa (Pig).